We begin with the raw amino-acid sequence, 253 residues long: 5'-nucleotidase SurE (253 aa).

Residues aspartate 8, aspartate 9, serine 40, and asparagine 93 each coordinate a divalent metal cation.

It belongs to the SurE nucleotidase family. A divalent metal cation serves as cofactor.

It is found in the cytoplasm. It catalyses the reaction a ribonucleoside 5'-phosphate + H2O = a ribonucleoside + phosphate. Functionally, nucleotidase that shows phosphatase activity on nucleoside 5'-monophosphates. This Haemophilus ducreyi (strain 35000HP / ATCC 700724) protein is 5'-nucleotidase SurE.